The primary structure comprises 619 residues: MKKLIAIIAVAAVVIAGFVFTANQPEQAEEVASLKTFSSPDEFREYLAKSAEISAFYPVVYTARAEVMVDSSKGAPLGEATPTAIPAVTTTPERYSETNVQVKGIDEPDIVKTDGVNIYYSPFPFIVYIRYPEKYYIDTTKVIRAFPPSNLSITGEIKESGNLLLHENVLMILNSEGIYAYNTETQKEVWSAEFNGSYVDARLYGGKLYVVTRSWLNFGEPCPIRPLTVNGKSVEIACSRIYHPTIPVTVDTTYTVVKLDAKTGEVENSVSFVGSSGMSVVYMSKNAIYVTYNSYADPAKLTYQFISENPDLVPDWIREKIEKLMDYDISSRAKQVEIMYLLEQLRASMSEDERLKFENEYYNRWENFTKKHAREIEKTHIAKFSLQLEAEGMNSVPGRLLNRFSLDEYNGYLRVATTVDWDENDLYVLDEKLEVVGKIQGFGLDERIYAVRFDGDVGFIVTFRQTDPFFVLDLSNPENPKIVGELKIPGFSSYLHRIDENTVLGVGREEGNVKLSLFDISDLTSPKEKNRYILQEYWSEVLSNHHAFLLDSQHGIFFLPAGQNGYIFSYKDGLKLIKAVKGNAVRAIYIDDYLYIIGPEEISVYDENSWEKVGELKLQ.

A signal peptide spans 1-21; sequence MKKLIAIIAVAAVVIAGFVFT.

This is an uncharacterized protein from Archaeoglobus fulgidus (strain ATCC 49558 / DSM 4304 / JCM 9628 / NBRC 100126 / VC-16).